We begin with the raw amino-acid sequence, 297 residues long: tRNA pseudouridine synthase B (297 aa).

The active-site Nucleophile is the aspartate 39.

The protein belongs to the pseudouridine synthase TruB family. Type 1 subfamily.

The catalysed reaction is uridine(55) in tRNA = pseudouridine(55) in tRNA. Its function is as follows. Responsible for synthesis of pseudouridine from uracil-55 in the psi GC loop of transfer RNAs. The protein is tRNA pseudouridine synthase B of Lactobacillus johnsonii (strain CNCM I-12250 / La1 / NCC 533).